The chain runs to 666 residues: Fructose-1,6-bisphosphatase class 3 (666 aa).

It belongs to the FBPase class 3 family. Mn(2+) serves as cofactor.

It carries out the reaction beta-D-fructose 1,6-bisphosphate + H2O = beta-D-fructose 6-phosphate + phosphate. The protein operates within carbohydrate biosynthesis; gluconeogenesis. This chain is Fructose-1,6-bisphosphatase class 3, found in Parabacteroides distasonis (strain ATCC 8503 / DSM 20701 / CIP 104284 / JCM 5825 / NCTC 11152).